Here is a 1065-residue protein sequence, read N- to C-terminus: Cellulose synthase A catalytic subunit 3 [UDP-forming] (1065 aa).

The Cytoplasmic segment spans residues 1 to 260 (MESEGETAGK…PSSRINPYRM (260 aa)). S3 carries the phosphoserine modification. Residues C20, C23, C39, C42, C47, C50, C62, and C65 each contribute to the Zn(2+) site. The segment at 20 to 66 (CQICSDNVGKTVDGDRFVACDICSFPVCRPCYEYERKDGNQSCPQCK) adopts an RING-type; degenerate zinc-finger fold. Phosphoserine is present on residues S151, S211, and S216. A helical membrane pass occupies residues 261–281 (VIMLRLVILCLFLHYRITNPV). The Extracellular segment spans residues 282 to 283 (PN). A helical transmembrane segment spans residues 284 to 304 (AFALWLVSVICEIWFALSWIL). Over 305–842 (DQFPKWFPVN…LERFAYVNTT (538 aa)) the chain is Cytoplasmic. Residues S343, K349, E350, and D379 each contribute to the UDP-alpha-D-glucose site. D379 is an active-site residue. The stretch at 433–457 (VKDRRAMKREYEEFKIRINALVSKA) forms a coiled coil. K520 is a UDP-alpha-D-glucose binding site. The Mn(2+) site is built by K521 and D545. Positions 643–672 (SKLCGGSRKKNSKAKKESDKKKSGRHTDST) are disordered. Basic and acidic residues predominate over residues 656–670 (AKKESDKKKSGRHTD). The active site involves D765. A helical membrane pass occupies residues 843 to 863 (IYPITSIPLLMYCTLPAVCLF). The Extracellular portion of the chain corresponds to 864-874 (TNQFIIPQISN). Residues 875–895 (IASIWFLSLFLSIFATGILEM) form a helical membrane-spanning segment. Residues 896–910 (RWSGVGIDEWWRNEQ) lie on the Cytoplasmic side of the membrane. A helical membrane pass occupies residues 911–931 (FWVIGGVSAHLFAVFQGILKV). At 932–961 (LAGIDTNFTVTSKASDEDGDFAELYLFKWT) the chain is on the extracellular side. N-linked (GlcNAc...) asparagine glycosylation occurs at N938. A helical membrane pass occupies residues 962-982 (TLLIPPTTLLIVNLVGVVAGV). The Cytoplasmic segment spans residues 983 to 993 (SYAINSGYQSW). The chain crosses the membrane as a helical span at residues 994–1014 (GPLFGKLFFAFWVIVHLYPFL). The Extracellular segment spans residues 1015 to 1023 (KGLMGRQNR). The chain crosses the membrane as a helical span at residues 1024–1044 (TPTIVVVWSVLLASIFSLLWV). At 1045–1065 (RIDPFTSRVTGPDILECGINC) the chain is on the cytoplasmic side.

This sequence belongs to the glycosyltransferase 2 family. Plant cellulose synthase subfamily. In terms of assembly, homodimer. Interacts with CESA1 and CESA6. Interacts with STL1 and STL2, but not with GOT1. Binds to CSI1 and CSI3. Interacts with PAT24/TIP1. The cofactor is Zn(2+). Requires Mn(2+) as cofactor. Palmitoylated, in part by PAT24/TIP1. As to expression, expressed in young plants, flowers and roots, and to a lower extent in leaves and stems. Localized in all cells except meristematic cells. Accumulates particularly in root caps, root hairs, epidermal layer, midveins of leaves and anthers. Not present in old tissues.

It is found in the cell membrane. The protein resides in the golgi apparatus membrane. The catalysed reaction is [(1-&gt;4)-beta-D-glucosyl](n) + UDP-alpha-D-glucose = [(1-&gt;4)-beta-D-glucosyl](n+1) + UDP + H(+). The protein operates within glycan metabolism; plant cellulose biosynthesis. Catalytic subunit of cellulose synthase terminal complexes ('rosettes'), required for beta-1,4-glucan microfibril crystallization, a major mechanism of the cell wall formation. Involved in the primary cell wall formation, especially in roots. This is Cellulose synthase A catalytic subunit 3 [UDP-forming] from Arabidopsis thaliana (Mouse-ear cress).